Here is a 332-residue protein sequence, read N- to C-terminus: Receptor polysaccharide phosphotransferase WefC (332 aa).

It belongs to the stealth family.

This Streptococcus oralis protein is Receptor polysaccharide phosphotransferase WefC (wefC).